The following is a 530-amino-acid chain: Histone-arginine methyltransferase CARMER (530 aa).

Positions 141-450 (ASQYFQFYGY…QSYDVTIDLH (310 aa)) constitute an SAM-dependent MTase PRMT-type domain. Residues glutamine 154, arginine 163, glycine 187, glutamate 209, glutamate 238, and threonine 266 each contribute to the S-adenosyl-L-methionine site. Arginine 501 carries the post-translational modification Asymmetric dimethylarginine; by autocatalysis.

Belongs to the class I-like SAM-binding methyltransferase superfamily. Protein arginine N-methyltransferase family. As to quaternary structure, homodimer. The dimethylated protein is the major form.

It is found in the cytoplasm. The protein resides in the nucleus. It carries out the reaction L-arginyl-[protein] + 2 S-adenosyl-L-methionine = N(omega),N(omega)-dimethyl-L-arginyl-[protein] + 2 S-adenosyl-L-homocysteine + 2 H(+). Methylates (mono- and asymmetric dimethylation) the guanidino nitrogens of arginyl residues in proteins. May methylate histone H3 at 'Arg-17' and activate transcription via chromatin remodeling. This Drosophila simulans (Fruit fly) protein is Histone-arginine methyltransferase CARMER (Art4).